The primary structure comprises 672 residues: MAQVVFSSWGRTIVDNRKGGEAQDVSFRLPTTLDGERQIAAFMGWDGIILYDLKVDVPAMAAEYMKRVQTQYCCGKCTPGKKGTKVLADVLAAIIEGRATEADLDTIDDLADLLTNCKCTLCQSSTIPVLDAVKHFREDFLAYITGIRKPANVHRFIDKYTAPCMDRCPAHIDIPAYIEAIKEYRFDESLDIIRDNMPLPSVCGRVCPHPCETHCRRKNVDDSVNIMVLKRSASDYEWMHNAAPPMQPKPQKNKKVAIVGAGPAGLACAYYLALEGYPCTIYEALPEGYGGGMIAVGIPPYRQPRHLLQRDIDIISSMGVDIIYDTRIGKDISLEELKQKFDAVFLAPGAHRSKPMGVEGEDKGYKGFLKGGIDFLREAYMGRPTGMGKKVVVVGGGNTAIDCVRVALREGAEESTLLYRRSRKEMPADVWEVDGADEEGVRFEFQVLPTRVLVDENEQVTGVECVRMALGEPDASGRRRPEPVPGSEFVVECDTVIPAIGQDPDLSFIPDNLGIDITKWNTVVTKYVPLKDAAGKDLKDGMGNPLARVLITDLEGVFAGGDAEIGPLTVVACIGNAHRAARVIQRWLEEGKAYLTEDELMEDILTNMPVYDKNEKVPWLDSRERAHQAEVHGQERASKGNYQEVELGFVDTQAVEEAERCLRCYRVAMAAI.

Residues Cys-203, Cys-207, Cys-211, and Cys-215 each coordinate [4Fe-4S] cluster. 254–283 (KKVAIVGAGPAGLACAYYLALEGYPCTIYE) provides a ligand contact to FAD. 388 to 421 (GKKVVVVGGGNTAIDCVRVALREGAEESTLLYRR) contacts NADP(+). 552–562 (TDLEGVFAGGD) is an FAD binding site.

As to quaternary structure, heterotetramer with 2 alpha subunits. [4Fe-4S] cluster serves as cofactor. FAD is required as a cofactor.

Its subcellular location is the cell membrane. Functionally, probably involved in acetate metabolism and not in the reduction of Fe(3+) chelates. May serve as a major route for NADP regeneration. This Geobacter sulfurreducens (strain DL-1 / KN400) protein is NADPH-Fe(3+) oxidoreductase subunit beta (sfrB).